We begin with the raw amino-acid sequence, 181 residues long: Transcription termination/antitermination protein NusG (181 aa).

The region spanning P130 to S161 is the KOW domain.

This sequence belongs to the NusG family. In terms of assembly, monomer. Interacts with the transcription termination factor Rho and with RNA polymerase.

Participates in transcription elongation, termination and antitermination. In the absence of Rho, increases the rate of transcription elongation by the RNA polymerase (RNAP), probably by partially suppressing pausing. In the presence of Rho, modulates most Rho-dependent termination events by interacting with the RNAP to render the complex more susceptible to the termination activity of Rho. May be required to overcome a kinetic limitation of Rho to function at certain terminators. Also involved in ribosomal RNA transcriptional antitermination. The polypeptide is Transcription termination/antitermination protein NusG (Yersinia pestis).